A 539-amino-acid polypeptide reads, in one-letter code: Alpha-aminoadipic semialdehyde dehydrogenase (539 aa).

The transit peptide at 1-26 (MWRVPGLLCVRVARKSKFSGSWNRPA) directs the protein to the mitochondrion. Lysine 94 is modified (N6-acetyllysine; alternate). Lysine 94 carries the post-translational modification N6-succinyllysine; alternate. NAD(+)-binding positions include 192-194 (TAF), lysine 218, 258-259 (GT), 274-275 (GS), 274-279 (GSTQVG), and 296-297 (EL). Catalysis depends on glutamate 296, which acts as the Proton acceptor. Residue cysteine 330 is the Nucleophile of the active site. Threonine 331 is a binding site for (S)-2-amino-6-oxohexanoate. Glutamate 427 is a binding site for NAD(+). Lysine 462 bears the N6-acetyllysine mark. Positions 489 and 490 each coordinate (S)-2-amino-6-oxohexanoate. Lysine 500 carries the post-translational modification N6-acetyllysine. Lysine 537 is modified (N6-succinyllysine).

The protein belongs to the aldehyde dehydrogenase family. As to quaternary structure, homotetramer.

The protein resides in the cytoplasm. Its subcellular location is the cytosol. The protein localises to the nucleus. It is found in the mitochondrion. It carries out the reaction nonanal + NAD(+) + H2O = nonanoate + NADH + 2 H(+). It catalyses the reaction (S)-2-amino-6-oxohexanoate + NAD(+) + H2O = L-2-aminoadipate + NADH + 2 H(+). The catalysed reaction is betaine aldehyde + NAD(+) + H2O = glycine betaine + NADH + 2 H(+). The enzyme catalyses an aldehyde + NAD(+) + H2O = a carboxylate + NADH + 2 H(+). It carries out the reaction hexanal + NAD(+) + H2O = hexanoate + NADH + 2 H(+). It catalyses the reaction octanal + NAD(+) + H2O = octanoate + NADH + 2 H(+). The catalysed reaction is (E)-non-2-enal + NAD(+) + H2O = (E)-non-2-enoate + NADH + 2 H(+). The enzyme catalyses (E)-4-hydroxynon-2-enal + NAD(+) + H2O = (E)-4-hydroxynon-2-enoate + NADH + 2 H(+). It participates in amine and polyamine biosynthesis; betaine biosynthesis via choline pathway; betaine from betaine aldehyde: step 1/1. In terms of biological role, multifunctional enzyme mediating important protective effects. Metabolizes betaine aldehyde to betaine, an important cellular osmolyte and methyl donor. Protects cells from oxidative stress by metabolizing a number of lipid peroxidation-derived aldehydes. Involved in lysine catabolism. The polypeptide is Alpha-aminoadipic semialdehyde dehydrogenase (ALDH7A1) (Bos taurus (Bovine)).